A 206-amino-acid polypeptide reads, in one-letter code: Guanylate kinase (206 aa).

The Guanylate kinase-like domain occupies 5–183; sequence FNLLILSGPS…SKEIILSIAK (179 aa). 12–19 lines the ATP pocket; it reads GPSGAGKS.

Belongs to the guanylate kinase family.

It localises to the cytoplasm. It carries out the reaction GMP + ATP = GDP + ADP. Its function is as follows. Essential for recycling GMP and indirectly, cGMP. In Helicobacter pylori (strain HPAG1), this protein is Guanylate kinase.